The chain runs to 85 residues: Small ribosomal subunit protein uS17 (85 aa).

It belongs to the universal ribosomal protein uS17 family. In terms of assembly, part of the 30S ribosomal subunit.

In terms of biological role, one of the primary rRNA binding proteins, it binds specifically to the 5'-end of 16S ribosomal RNA. The chain is Small ribosomal subunit protein uS17 from Aggregatibacter actinomycetemcomitans (Actinobacillus actinomycetemcomitans).